We begin with the raw amino-acid sequence, 291 residues long: HTH-type transcriptional regulator CitR (291 aa).

Positions 1 to 58 (MDFKWLHTFVTAAKYENFRKTAETLFLSQPTVTVHIKQLEKEISCKLFERKGRQIQLT) constitute an HTH lysR-type domain. The segment at residues 18 to 37 (FRKTAETLFLSQPTVTVHIK) is a DNA-binding region (H-T-H motif).

Belongs to the LysR transcriptional regulatory family.

It is found in the cytoplasm. Its function is as follows. Negative regulatory protein for the citA gene for citrate synthase I. The protein is HTH-type transcriptional regulator CitR (citR) of Bacillus subtilis (strain 168).